Consider the following 1420-residue polypeptide: DNA-directed RNA polymerase subunit beta' (1420 aa).

Zn(2+) is bound by residues C71, C73, C86, and C89. Mg(2+)-binding residues include D461, D463, and D465. Zn(2+)-binding residues include C815, C889, C896, and C899.

Belongs to the RNA polymerase beta' chain family. The RNAP catalytic core consists of 2 alpha, 1 beta, 1 beta' and 1 omega subunit. When a sigma factor is associated with the core the holoenzyme is formed, which can initiate transcription. Mg(2+) serves as cofactor. Requires Zn(2+) as cofactor.

It carries out the reaction RNA(n) + a ribonucleoside 5'-triphosphate = RNA(n+1) + diphosphate. DNA-dependent RNA polymerase catalyzes the transcription of DNA into RNA using the four ribonucleoside triphosphates as substrates. The protein is DNA-directed RNA polymerase subunit beta' of Histophilus somni (strain 2336) (Haemophilus somnus).